The sequence spans 329 residues: Legumin type B (329 aa).

2 disordered regions span residues 47-79 and 97-149; these read PETQEEQQERHQQKHSLPVGRRGGQHQQEEDGN and EEDT…GRNG. Over residues 99–112 the composition is skewed to basic and acidic residues; it reads DTAKRLRSPRDKRN. Acidic residues predominate over residues 129 to 138; sequence QQEEEEEEEE. One can recognise a Cupin type-1 domain in the interval 161–308; sequence ENIAQPARAD…AFGLRQRQVT (148 aa).

The protein belongs to the 11S seed storage protein (globulins) family. Hexamer; each subunit is composed of an acidic and a basic chain derived from a single precursor and linked by a disulfide bond.

Functionally, this protein found in the seeds of many leguminous and non-leguminous plants is the source of sulfur-containing amino acids in seed meals. The sequence is that of Legumin type B (LEB6) from Vicia faba (Broad bean).